Consider the following 406-residue polypeptide: Terminal uridylyltransferase 7 (406 aa).

The transit peptide at Met-1–His-15 directs the protein to the mitochondrion. UTP is bound by residues Ser-54 and Ser-64–Asp-65. 2 residues coordinate Mg(2+): Asp-65 and Asp-67. UTP is bound by residues Gly-138–Ser-142, Lys-164, Lys-168, and Asn-181–Phe-183.

The protein belongs to the DNA polymerase type-B-like family. In terms of assembly, component of the mitochondrial RNA editing core complex-like (RECC-like), also known as the editosome-like complex; only a small proportion of MEAT1 associates with the complex. Interacts with RNA-editing ligase REL1. Requires Mg(2+) as cofactor.

It is found in the mitochondrion matrix. The enzyme catalyses RNA(n) + UTP = RNA(n)-3'-uridine ribonucleotide + diphosphate. Its function is as follows. Terminal uridylyltransferase which, as part of the mitochondrial RNA editing core-like complex (RECC-like), is involved in the post-transcriptional editing of mitochondrial RNA, a process involving the addition and deletion of uridine (U) nucleotides in the pre-mRNA. Specifically, catalyzes the addition of U to single-stranded RNA with a preference for a 3'-terminal U and adds the number of Us specified by a guide RNA (gRNA) to precleaved double-stranded RNA editing substrates. Essential for insect and bloodstream developmental forms viability. In Trypanosoma brucei brucei, this protein is Terminal uridylyltransferase 7.